The chain runs to 519 residues: Cytochrome P450 4A11 (519 aa).

Residues 1–4 (MSVS) constitute a propeptide that is removed on maturation. Glutamate 321 serves as a coordination point for heme. A Phosphoserine modification is found at serine 440. Residue cysteine 457 coordinates heme.

The protein belongs to the cytochrome P450 family. Requires heme as cofactor. As to expression, expressed in liver. Expressed in S2 and S3 segments of proximal tubules in cortex and outer medulla of kidney.

The protein localises to the endoplasmic reticulum membrane. It is found in the microsome membrane. It carries out the reaction an organic molecule + reduced [NADPH--hemoprotein reductase] + O2 = an alcohol + oxidized [NADPH--hemoprotein reductase] + H2O + H(+). The catalysed reaction is an omega-methyl-long-chain fatty acid + reduced [NADPH--hemoprotein reductase] + O2 = an omega-hydroxy-long-chain fatty acid + oxidized [NADPH--hemoprotein reductase] + H2O + H(+). The enzyme catalyses dodecanoate + reduced [NADPH--hemoprotein reductase] + O2 = 12-hydroxydodecanoate + oxidized [NADPH--hemoprotein reductase] + H2O + H(+). It catalyses the reaction tetradecanoate + reduced [NADPH--hemoprotein reductase] + O2 = 14-hydroxytetradecanoate + oxidized [NADPH--hemoprotein reductase] + H2O + H(+). It carries out the reaction hexadecanoate + reduced [NADPH--hemoprotein reductase] + O2 = 16-hydroxyhexadecanoate + oxidized [NADPH--hemoprotein reductase] + H2O + H(+). The catalysed reaction is (9Z)-octadecenoate + reduced [NADPH--hemoprotein reductase] + O2 = 18-hydroxy-(9Z)-octadecenoate + oxidized [NADPH--hemoprotein reductase] + H2O + H(+). The enzyme catalyses (5Z,8Z,11Z,14Z)-eicosatetraenoate + reduced [NADPH--hemoprotein reductase] + O2 = 20-hydroxy-(5Z,8Z,11Z,14Z)-eicosatetraenoate + oxidized [NADPH--hemoprotein reductase] + H2O + H(+). It catalyses the reaction 22-hydroxydocosanoate + reduced [NADPH--hemoprotein reductase] + O2 = 22-oxodocosanoate + oxidized [NADPH--hemoprotein reductase] + 2 H2O + H(+). It carries out the reaction 22-oxodocosanoate + reduced [NADPH--hemoprotein reductase] + O2 = docosanedioate + oxidized [NADPH--hemoprotein reductase] + H2O + 2 H(+). The catalysed reaction is (9R,10S)-epoxy-octadecanoate + reduced [NADPH--hemoprotein reductase] + O2 = 18-hydroxy-(9R,10S)-epoxy-octadecanoate + oxidized [NADPH--hemoprotein reductase] + H2O + H(+). The enzyme catalyses 3-hydroxyhexadecanoate + reduced [NADPH--hemoprotein reductase] + O2 = 3,16-dihydroxyhexadecanoate + oxidized [NADPH--hemoprotein reductase] + H2O + H(+). The protein operates within lipid metabolism; arachidonate metabolism. It functions in the pathway lipid metabolism; oxylipin biosynthesis. With respect to regulation, activated by cytochrome b5. In terms of biological role, a cytochrome P450 monooxygenase involved in the metabolism of fatty acids and their oxygenated derivatives (oxylipins). Mechanistically, uses molecular oxygen inserting one oxygen atom into a substrate, and reducing the second into a water molecule, with two electrons provided by NADPH via cytochrome P450 reductase (CPR; NADPH-ferrihemoprotein reductase). Catalyzes predominantly the oxidation of the terminal carbon (omega-oxidation) of saturated and unsaturated fatty acids, the catalytic efficiency decreasing in the following order: dodecanoic &gt; tetradecanoic &gt; (9Z)-octadecenoic &gt; (9Z,12Z)-octadecadienoic &gt; hexadecanoic acid. Acts as a major omega-hydroxylase for dodecanoic (lauric) acid in liver. Participates in omega-hydroxylation of (5Z,8Z,11Z,14Z)-eicosatetraenoic acid (arachidonate) to 20-hydroxyeicosatetraenoic acid (20-HETE), a signaling molecule acting both as vasoconstrictive and natriuretic with overall effect on arterial blood pressure. Can also catalyze the oxidation of the penultimate carbon (omega-1 oxidation) of fatty acids with lower efficiency. May contribute to the degradation of saturated very long-chain fatty acids (VLCFAs) such as docosanoic acid, by catalyzing successive omega-oxidations to the corresponding dicarboxylic acid, thereby initiating chain shortening. Omega-hydroxylates (9R,10S)-epoxy-octadecanoate stereoisomer. Plays a minor role in omega-oxidation of long-chain 3-hydroxy fatty acids. Has little activity toward prostaglandins A1 and E1. In Homo sapiens (Human), this protein is Cytochrome P450 4A11.